The sequence spans 234 residues: Carboxy-S-adenosyl-L-methionine synthase (234 aa).

Residues Tyr35, 60–62 (GCS), 109–110 (DV), Asn124, and Arg191 each bind S-adenosyl-L-methionine.

Belongs to the class I-like SAM-binding methyltransferase superfamily. Cx-SAM synthase family. Homodimer.

It catalyses the reaction prephenate + S-adenosyl-L-methionine = carboxy-S-adenosyl-L-methionine + 3-phenylpyruvate + H2O. In terms of biological role, catalyzes the conversion of S-adenosyl-L-methionine (SAM) to carboxy-S-adenosyl-L-methionine (Cx-SAM). The polypeptide is Carboxy-S-adenosyl-L-methionine synthase (Campylobacter curvus (strain 525.92)).